Consider the following 379-residue polypeptide: UDP-N-acetylglucosamine--N-acetylmuramyl-(pentapeptide) pyrophosphoryl-undecaprenol N-acetylglucosamine transferase (379 aa).

Residues 19–21 (TGG), asparagine 133, arginine 174, serine 207, isoleucine 261, and glutamine 306 contribute to the UDP-N-acetyl-alpha-D-glucosamine site.

The protein belongs to the glycosyltransferase 28 family. MurG subfamily.

Its subcellular location is the cell inner membrane. It catalyses the reaction di-trans,octa-cis-undecaprenyl diphospho-N-acetyl-alpha-D-muramoyl-L-alanyl-D-glutamyl-meso-2,6-diaminopimeloyl-D-alanyl-D-alanine + UDP-N-acetyl-alpha-D-glucosamine = di-trans,octa-cis-undecaprenyl diphospho-[N-acetyl-alpha-D-glucosaminyl-(1-&gt;4)]-N-acetyl-alpha-D-muramoyl-L-alanyl-D-glutamyl-meso-2,6-diaminopimeloyl-D-alanyl-D-alanine + UDP + H(+). The protein operates within cell wall biogenesis; peptidoglycan biosynthesis. Functionally, cell wall formation. Catalyzes the transfer of a GlcNAc subunit on undecaprenyl-pyrophosphoryl-MurNAc-pentapeptide (lipid intermediate I) to form undecaprenyl-pyrophosphoryl-MurNAc-(pentapeptide)GlcNAc (lipid intermediate II). This chain is UDP-N-acetylglucosamine--N-acetylmuramyl-(pentapeptide) pyrophosphoryl-undecaprenol N-acetylglucosamine transferase, found in Porphyromonas gingivalis (strain ATCC BAA-308 / W83).